The primary structure comprises 475 residues: MQMVSIKNQGCVTQIIGPVLDIEFPNGQLPKVFNALKVKGPENIITCEVQQLLGDNRVRAVAMSSTEGLKRGIEVTDTGAPITVPVGIPTLGRIFNVLGEPVDNLGDIQSEDSLPIHRAAPSFTQLETKPSIFETGIKVVDLLAPYRKGGKIGLFGGAGVGKTVLIMELINNIAKAHGGVSVFGGVGERTREGNDLYEEMKESKVINADNLKESKVALVYGQMNEPPGARMRVGLTALTMAEYFRDINKQDVLLFIDNIFRFVQAGSEVSALLGRMPSAVGYQPTLATEMGTLQERITSTTDGSITSIQAVYVPADDLTDPAPATTFAHLDATTVLSRSLAAKGIYPAVDPLGSTSTMLQPSIVGSQHYSTAQQIKSTLQRYKELQDIIAILGLDELSEDDRLTVARARKIERFLSQPFFVAEVFTGSPGKYVSLEDSIKGFNMILGGELDDLPEQAFYLVGNIDEAISKAEKLK.

156–163 is an ATP binding site; sequence GGAGVGKT.

The protein belongs to the ATPase alpha/beta chains family. As to quaternary structure, F-type ATPases have 2 components, CF(1) - the catalytic core - and CF(0) - the membrane proton channel. CF(1) has five subunits: alpha(3), beta(3), gamma(1), delta(1), epsilon(1). CF(0) has four main subunits: a(1), b(1), b'(1) and c(9-12).

Its subcellular location is the plastid. The protein localises to the chloroplast thylakoid membrane. It carries out the reaction ATP + H2O + 4 H(+)(in) = ADP + phosphate + 5 H(+)(out). Produces ATP from ADP in the presence of a proton gradient across the membrane. The catalytic sites are hosted primarily by the beta subunits. This chain is ATP synthase subunit beta, chloroplastic, found in Gracilaria tenuistipitata var. liui (Red alga).